Here is a 206-residue protein sequence, read N- to C-terminus: MVCSLLKSMTLFSLKYLIQLWAQFSSNFSFSTLQCDFILLLFLGSIASKMSALSKHWKNASLDSQHNFLCERVLGGCDSFLPPSNENKPIAILLLFLSVYSCIYVPAQRYNSTRLCMYVCMYVGESSPPFYKAAPTTAAPFHMSVSFVQLSYNRQSHFLPRGRARFCWICSGANIPSRNGQGPDNTIGHLHHNAQGQKFIHDNNTN.

This is an uncharacterized protein from Saccharomyces cerevisiae (strain ATCC 204508 / S288c) (Baker's yeast).